The sequence spans 354 residues: Protein RecA (354 aa).

67–74 (GPESSGKT) contacts ATP.

The protein belongs to the RecA family.

It is found in the cytoplasm. In terms of biological role, can catalyze the hydrolysis of ATP in the presence of single-stranded DNA, the ATP-dependent uptake of single-stranded DNA by duplex DNA, and the ATP-dependent hybridization of homologous single-stranded DNAs. It interacts with LexA causing its activation and leading to its autocatalytic cleavage. The chain is Protein RecA from Yersinia enterocolitica serotype O:8 / biotype 1B (strain NCTC 13174 / 8081).